Consider the following 498-residue polypeptide: UDP-N-acetylmuramoyl-L-alanyl-D-glutamate--2,6-diaminopimelate ligase (498 aa).

Ser29 contacts UDP-N-acetyl-alpha-D-muramoyl-L-alanyl-D-glutamate. 120–126 contacts ATP; that stretch reads GTDGKTS. Residues 162-163, Ser189, Gln195, and Arg197 contribute to the UDP-N-acetyl-alpha-D-muramoyl-L-alanyl-D-glutamate site; that span reads TT. Position 229 is an N6-carboxylysine (Lys229). Meso-2,6-diaminopimelate is bound by residues Arg392, 416 to 419, Gly466, and Glu470; that span reads DNPR. The Meso-diaminopimelate recognition motif signature appears at 416–419; the sequence is DNPR.

Belongs to the MurCDEF family. MurE subfamily. The cofactor is Mg(2+). Carboxylation is probably crucial for Mg(2+) binding and, consequently, for the gamma-phosphate positioning of ATP.

It is found in the cytoplasm. It carries out the reaction UDP-N-acetyl-alpha-D-muramoyl-L-alanyl-D-glutamate + meso-2,6-diaminopimelate + ATP = UDP-N-acetyl-alpha-D-muramoyl-L-alanyl-gamma-D-glutamyl-meso-2,6-diaminopimelate + ADP + phosphate + H(+). It functions in the pathway cell wall biogenesis; peptidoglycan biosynthesis. Catalyzes the addition of meso-diaminopimelic acid to the nucleotide precursor UDP-N-acetylmuramoyl-L-alanyl-D-glutamate (UMAG) in the biosynthesis of bacterial cell-wall peptidoglycan. This chain is UDP-N-acetylmuramoyl-L-alanyl-D-glutamate--2,6-diaminopimelate ligase, found in Alkalilimnicola ehrlichii (strain ATCC BAA-1101 / DSM 17681 / MLHE-1).